Here is a 256-residue protein sequence, read N- to C-terminus: Undecaprenyl-diphosphatase (256 aa).

A run of 7 helical transmembrane segments spans residues 8–28 (VLGIVEGISEFLPISSTGHLI), 41–61 (FVKSFEISIQLGSILAVVVLY), 75–95 (IIAAFIPTGIIGFLLYKLIKG), 96–116 (FLIGNDLVVVVSLILGGIILI), 175–195 (AEFSFLLAIPTMFAATTYDLI), 208–228 (ILIIGFITSFITALIVVKWFL), and 236–256 (LKIFGFYRILIGLVYAAFFLF).

Belongs to the UppP family.

It is found in the cell inner membrane. The enzyme catalyses di-trans,octa-cis-undecaprenyl diphosphate + H2O = di-trans,octa-cis-undecaprenyl phosphate + phosphate + H(+). Functionally, catalyzes the dephosphorylation of undecaprenyl diphosphate (UPP). Confers resistance to bacitracin. The chain is Undecaprenyl-diphosphatase from Aquifex aeolicus (strain VF5).